The following is a 278-amino-acid chain: Bifunctional protein FolD (278 aa).

Residues 162–164 (GAG) and I228 contribute to the NADP(+) site.

It belongs to the tetrahydrofolate dehydrogenase/cyclohydrolase family. In terms of assembly, homodimer.

It catalyses the reaction (6R)-5,10-methylene-5,6,7,8-tetrahydrofolate + NADP(+) = (6R)-5,10-methenyltetrahydrofolate + NADPH. The enzyme catalyses (6R)-5,10-methenyltetrahydrofolate + H2O = (6R)-10-formyltetrahydrofolate + H(+). It functions in the pathway one-carbon metabolism; tetrahydrofolate interconversion. Catalyzes the oxidation of 5,10-methylenetetrahydrofolate to 5,10-methenyltetrahydrofolate and then the hydrolysis of 5,10-methenyltetrahydrofolate to 10-formyltetrahydrofolate. The protein is Bifunctional protein FolD of Hydrogenobaculum sp. (strain Y04AAS1).